The chain runs to 120 residues: Insulin-like peptide 3 (120 aa).

An N-terminal signal peptide occupies residues 1-29 (MGIEMRCQDRRILLPSLLLLILMIGGVQA). 3 disulfide bridges follow: Cys34–Cys101, Cys46–Cys114, and Cys100–Cys105. A propeptide spans 51–89 (NAMTKRTLDPVNFNQIDGFEDRSLLERLLSDSSVQMLKT) (connecting peptide).

It belongs to the insulin family. In terms of assembly, heterodimer of a B chain and an A chain linked by two disulfide bonds. In terms of tissue distribution, expressed at a high level in seven cells of each larval brain hemisphere that may correspond to neurosecretory cells.

It is found in the secreted. Functionally, possible ligand of InR/insulin-like receptor. This is Insulin-like peptide 3 from Drosophila melanogaster (Fruit fly).